A 251-amino-acid polypeptide reads, in one-letter code: Flagellar basal-body rod protein FlgF (251 aa).

Belongs to the flagella basal body rod proteins family. In terms of assembly, the basal body constitutes a major portion of the flagellar organelle and consists of five rings (E,L,P,S, and M) mounted on a central rod. The rod consists of about 26 subunits of FlgG in the distal portion, and FlgB, FlgC and FlgF are thought to build up the proximal portion of the rod with about 6 subunits each.

It localises to the bacterial flagellum basal body. The sequence is that of Flagellar basal-body rod protein FlgF (flgF) from Escherichia coli (strain K12).